Reading from the N-terminus, the 192-residue chain is MVTPRPAPARSPALLLLLLLATARGQEQDQTTDWRATLKTIRNGIHKIDTYLNAALDLLGGEDGLCQYKCSDGSKPVPRYGYKPSPPNGCGSPLFGVHLNIGIPSLTKCCNQHDRCYETCGKSKNDCDEEFQYCLSKICRDVQKTLGLSQNVQACETTVELLFDSVIHLGCKPYLDSQRAACWCRYEEKTDL.

A signal peptide spans 1–25; that stretch reads MVTPRPAPARSPALLLLLLLATARG. Ca(2+) is bound by residues glycine 91, proline 93, and phenylalanine 95. The active site involves histidine 113. Aspartate 114 is a Ca(2+) binding site. Aspartate 128 is a catalytic residue.

Belongs to the phospholipase A2 family. Ca(2+) is required as a cofactor.

The protein localises to the secreted. It localises to the cytoplasm. It catalyses the reaction a 1,2-diacyl-sn-glycero-3-phosphocholine + H2O = a 1-acyl-sn-glycero-3-phosphocholine + a fatty acid + H(+). In terms of biological role, PA2 catalyzes the calcium-dependent hydrolysis of the 2-acyl groups in 3-sn-phosphoglycerides. Does not exhibit detectable activity toward sn-2-arachidonoyl- or linoleoyl-phosphatidylcholine or -phosphatidylethanolamine. The sequence is that of Group XIIA secretory phospholipase A2 (Pla2g12a) from Mus musculus (Mouse).